The primary structure comprises 512 residues: Cytochrome P450 72A15 (512 aa).

Residues 2–22 (EISVASVTISVVLAVVSWWIW) traverse the membrane as a helical segment. C460 is a binding site for heme.

Belongs to the cytochrome P450 family. Requires heme as cofactor.

It is found in the membrane. The polypeptide is Cytochrome P450 72A15 (CYP72A15) (Arabidopsis thaliana (Mouse-ear cress)).